The sequence spans 66 residues: Heat-stable enterotoxin (66 aa).

Positions 1-19 (MKKIVFVLVLMLSSFGTFG) are cleaved as a signal peptide. The propeptide occupies 20-50 (QETASRQFGDAFSTPIAAEVNKKACDTELPP). 3 disulfide bridges follow: Cys54–Cys59, Cys55–Cys63, and Cys58–Cys66.

The protein belongs to the heat-stable enterotoxin family.

It is found in the secreted. Toxin which activates the particulate form of guanylate cyclase and increases cyclic GMP levels within the host intestinal epithelial cells. This chain is Heat-stable enterotoxin (yst), found in Yersinia kristensenii.